We begin with the raw amino-acid sequence, 423 residues long: Protein CLP1 homolog (423 aa).

ATP-binding positions include Glu16, Lys57, and 119–124 (DVGKST).

The protein belongs to the Clp1 family. Clp1 subfamily.

It is found in the nucleus. Functionally, required for endonucleolytic cleavage during polyadenylation-dependent pre-mRNA 3'-end formation. The sequence is that of Protein CLP1 homolog (cbc) from Drosophila melanogaster (Fruit fly).